The sequence spans 143 residues: UPF0260 protein plu2141 (143 aa).

The protein belongs to the UPF0260 family.

This Photorhabdus laumondii subsp. laumondii (strain DSM 15139 / CIP 105565 / TT01) (Photorhabdus luminescens subsp. laumondii) protein is UPF0260 protein plu2141.